A 254-amino-acid chain; its full sequence is Alcohol dehydrogenase (254 aa).

10-33 provides a ligand contact to NAD(+); it reads FVAGLGGIGLDTSREIVKSGPKNL. Ser138 serves as a coordination point for substrate. Tyr151 serves as the catalytic Proton acceptor.

It belongs to the short-chain dehydrogenases/reductases (SDR) family. As to quaternary structure, homodimer.

It catalyses the reaction a primary alcohol + NAD(+) = an aldehyde + NADH + H(+). It carries out the reaction a secondary alcohol + NAD(+) = a ketone + NADH + H(+). This is Alcohol dehydrogenase (Adh) from Drosophila heteroneura (Fruit fly).